The primary structure comprises 580 residues: High affinity choline transporter 1 (580 aa).

The Extracellular portion of the chain corresponds to Met1 to Glu6. Residues Gly7–Trp27 form a helical membrane-spanning segment. Over Lys28–Asp48 the chain is Cytoplasmic. Residues Ile49–Asn69 form a helical membrane-spanning segment. Residues Gly70–Gly81 lie on the Extracellular side of the membrane. A helical transmembrane segment spans residues Leu82 to Phe102. Over Ala103–Arg125 the chain is Cytoplasmic. The chain crosses the membrane as a helical span at residues Met126–Phe146. Residues Ser147–Ser164 are Extracellular-facing. A helical transmembrane segment spans residues Val165 to Ala185. The Cytoplasmic segment spans residues Tyr186–Gln191. Residues Leu192 to Val212 form a helical membrane-spanning segment. The Extracellular segment spans residues Thr213 to Val237. A helical membrane pass occupies residues Tyr238–Phe258. Topologically, residues Gln259–Ser274 are cytoplasmic. Residues Phe275–Gly295 form a helical membrane-spanning segment. Residues Ala296–Asp317 are Extracellular-facing. The N-linked (GlcNAc...) asparagine glycan is linked to Asn301. Residues Met318 to Gly338 form a helical membrane-spanning segment. Over Ala339–Glu376 the chain is Cytoplasmic. The helical transmembrane segment at Ile377–Leu397 threads the bilayer. Residues Leu398 to Trp406 lie on the Extracellular side of the membrane. Residues Tyr407–Ile427 form a helical membrane-spanning segment. At Lys428 to Ala435 the chain is on the cytoplasmic side. Residues Val436–Leu456 traverse the membrane as a helical segment. Residues Gln457–Thr481 lie on the Extracellular side of the membrane. The helical transmembrane segment at Leu482–Phe502 threads the bilayer. A mediates interaction with SEC14L1 region spans residues Phe502–Gln580. Residues Glu503 to Gln580 lie on the Cytoplasmic side of the membrane. The short motif at Asp527–Val532 is the Dileucine-like motif element.

It belongs to the sodium:solute symporter (SSF) (TC 2.A.21) family. In terms of assembly, homooligomerizes at cell surface. Interacts with SEC14L1; may regulate SLC5A7. Phosphorylated by PKC and dephosphorylated by PP1/PP2A. As to expression, found in spinal cord, brain-stem, mid-brain and striatum. Specific for cholinergic neurons.

Its subcellular location is the presynaptic cell membrane. It localises to the cell projection. The protein resides in the axon. The protein localises to the early endosome membrane. It is found in the cytoplasmic vesicle. Its subcellular location is the secretory vesicle. It localises to the synaptic vesicle membrane. The enzyme catalyses choline(out) + n Na(+)(out) = choline(in) + n Na(+)(in). Its activity is regulated as follows. Choline uptake activity is regulated by SLC5A7/CHT1 internalization (inactive form) from the cell surface and recycling of internalized SLC5A7/CHT1 into the cell surface (active form). Activated by extracellular chloride ion. Specifically inhibited by nanomolar concentrations of hemicholinium 3. Its function is as follows. High-affinity Na(+)-coupled choline transmembrane symporter. Functions as an electrogenic, voltage-dependent transporter with variable charge/choline stoichiometry. Choline uptake and choline-induced current is also Cl(-)-dependent where Cl(-) is likely a regulatory ion rather than cotransported ion. Plays a critical role in acetylcholine (ACh) synthesis by taking up the substrate choline from the synaptic cleft into the presynaptic nerve terminals after neurotransmitter release. SLC5A7/CHT1-mediated choline high-affinity transport in cholinergic neurons is the rate-limiting step for production of ACh, thereby facilitating communication by subsequent action potentials. Localized predominantly in presynaptic terminal intracellular organelles, and translocated to the plasma membrane in active form in response to neuronal activity. The sequence is that of High affinity choline transporter 1 from Mus musculus (Mouse).